The following is a 382-amino-acid chain: Queuine tRNA-ribosyltransferase (382 aa).

Asp-93 (proton acceptor) is an active-site residue. Residues 93-97, Asp-147, Gln-191, and Gly-218 each bind substrate; that span reads DSGGF. An RNA binding region spans residues 249–255; it reads GVGKPED. Asp-268 functions as the Nucleophile in the catalytic mechanism. Positions 273-277 are RNA binding; important for wobble base 34 recognition; it reads TRNAR. Zn(2+) contacts are provided by Cys-306, Cys-308, Cys-311, and His-337.

It belongs to the queuine tRNA-ribosyltransferase family. In terms of assembly, homodimer. Within each dimer, one monomer is responsible for RNA recognition and catalysis, while the other monomer binds to the replacement base PreQ1. Zn(2+) is required as a cofactor.

It carries out the reaction 7-aminomethyl-7-carbaguanine + guanosine(34) in tRNA = 7-aminomethyl-7-carbaguanosine(34) in tRNA + guanine. The protein operates within tRNA modification; tRNA-queuosine biosynthesis. Functionally, catalyzes the base-exchange of a guanine (G) residue with the queuine precursor 7-aminomethyl-7-deazaguanine (PreQ1) at position 34 (anticodon wobble position) in tRNAs with GU(N) anticodons (tRNA-Asp, -Asn, -His and -Tyr). Catalysis occurs through a double-displacement mechanism. The nucleophile active site attacks the C1' of nucleotide 34 to detach the guanine base from the RNA, forming a covalent enzyme-RNA intermediate. The proton acceptor active site deprotonates the incoming PreQ1, allowing a nucleophilic attack on the C1' of the ribose to form the product. After dissociation, two additional enzymatic reactions on the tRNA convert PreQ1 to queuine (Q), resulting in the hypermodified nucleoside queuosine (7-(((4,5-cis-dihydroxy-2-cyclopenten-1-yl)amino)methyl)-7-deazaguanosine). The sequence is that of Queuine tRNA-ribosyltransferase from Haemophilus influenzae (strain ATCC 51907 / DSM 11121 / KW20 / Rd).